A 174-amino-acid chain; its full sequence is Repair DNA polymerase X (174 aa).

An involved in ssDNA binding region spans residues 42 to 51; that stretch reads REEKMLNDVD. Positions 49 and 51 each coordinate Mg(2+). C81 and C86 form a disulfide bridge. D100 contacts Mg(2+).

Belongs to the DNA polymerase type-X family. Mg(2+) serves as cofactor.

The protein localises to the virion. The enzyme catalyses DNA(n) + a 2'-deoxyribonucleoside 5'-triphosphate = DNA(n+1) + diphosphate. Its function is as follows. Error-prone polymerase lacking a proofreading 3'-5' exonuclease which catalyzes the gap-filling reaction during the DNA repair process. Specifically binds intermediates in the single-nucleotide base-excision repair process. Also catalyzes DNA polymerization with low nucleotide-insertion fidelity. Probably acts as a strategic DNA mutase, which gives rise to a rapid emergence of variants. Generates mismatched G-G pairs, in that case, the polymerase first binds the deoxynucleotide followed by mismatch formation. Together with the viral DNA ligase, fills the single nucleotide gaps generated by the AP endonuclease. Binds DNA with high affinity via the helix alphaE. The polypeptide is Repair DNA polymerase X (African swine fever virus (isolate Tick/Malawi/Lil 20-1/1983) (ASFV)).